We begin with the raw amino-acid sequence, 364 residues long: S-adenosylmethionine:tRNA ribosyltransferase-isomerase (364 aa).

This sequence belongs to the QueA family. Monomer.

It is found in the cytoplasm. It carries out the reaction 7-aminomethyl-7-carbaguanosine(34) in tRNA + S-adenosyl-L-methionine = epoxyqueuosine(34) in tRNA + adenine + L-methionine + 2 H(+). Its pathway is tRNA modification; tRNA-queuosine biosynthesis. Its function is as follows. Transfers and isomerizes the ribose moiety from AdoMet to the 7-aminomethyl group of 7-deazaguanine (preQ1-tRNA) to give epoxyqueuosine (oQ-tRNA). The protein is S-adenosylmethionine:tRNA ribosyltransferase-isomerase of Synechococcus sp. (strain CC9902).